The primary structure comprises 473 residues: Exodeoxyribonuclease I (473 aa).

The Exonuclease domain occupies 9 to 188; it reads IYDYESFGVN…AMADVYATIA (180 aa). Residues Asp11, Glu13, and Asp182 each coordinate Mg(2+). Glu13 lines the substrate pocket. Residues 198–353 form the ExoI SH3-like domain; it reads PKLFQYFFEN…KVADIFNEER (156 aa). The ExoI C-terminal domain maps to 356–472; it reads ASNDNVETEL…QVYEYGIKLL (117 aa).

In terms of assembly, monomer. Interacts with ssb (via C-terminus); this interaction stimulates the exonuclease activity by recruiting the enzyme to its substrate. Mg(2+) is required as a cofactor.

It carries out the reaction Exonucleolytic cleavage in the 3'- to 5'-direction to yield nucleoside 5'-phosphates.. In terms of biological role, degrades single-stranded DNA (ssDNA) in a highly processive manner. Also functions as a DNA deoxyribophosphodiesterase that releases deoxyribose-phosphate moieties following the cleavage of DNA at an apurinic/apyrimidinic (AP) site by either an AP endonuclease or AP lyase. Involved in genome maintenance but probably not in phase variation, which contributes to the virulence and disease. The protein is Exodeoxyribonuclease I (sbcB) of Haemophilus influenzae (strain ATCC 51907 / DSM 11121 / KW20 / Rd).